Here is a 726-residue protein sequence, read N- to C-terminus: Catalase-peroxidase (726 aa).

Residues 1–33 are disordered; sequence MSTTDDTHNTLSTGKCPFHQGGHDRSAGAGTAS. The segment at residues 105-226 is a cross-link (tryptophyl-tyrosyl-methioninium (Trp-Tyr) (with M-252)); it reads WHGAGTYRSI…LGATEMGLIY (122 aa). H106 functions as the Proton acceptor in the catalytic mechanism. Positions 226 to 252 form a cross-link, tryptophyl-tyrosyl-methioninium (Tyr-Met) (with W-105); the sequence is YVNPEGPDHSGEPLSAAAAIRATFGNM. Heme b is bound at residue H267.

Belongs to the peroxidase family. Peroxidase/catalase subfamily. Homodimer or homotetramer. Heme b is required as a cofactor. Post-translationally, formation of the three residue Trp-Tyr-Met cross-link is important for the catalase, but not the peroxidase activity of the enzyme.

It carries out the reaction H2O2 + AH2 = A + 2 H2O. The catalysed reaction is 2 H2O2 = O2 + 2 H2O. Functionally, bifunctional enzyme with both catalase and broad-spectrum peroxidase activity. In Salmonella paratyphi A (strain ATCC 9150 / SARB42), this protein is Catalase-peroxidase.